The sequence spans 408 residues: Imidazolonepropionase (408 aa).

The Fe(3+) site is built by His-73 and His-75. Zn(2+) contacts are provided by His-73 and His-75. The 4-imidazolone-5-propanoate site is built by Arg-82, Tyr-145, and His-178. Tyr-145 contacts N-formimidoyl-L-glutamate. A Fe(3+)-binding site is contributed by His-243. His-243 contributes to the Zn(2+) binding site. 4-imidazolone-5-propanoate is bound at residue Gln-246. Position 318 (Asp-318) interacts with Fe(3+). Residue Asp-318 participates in Zn(2+) binding. The N-formimidoyl-L-glutamate site is built by Asn-320 and Gly-322. Residue Ser-323 participates in 4-imidazolone-5-propanoate binding.

This sequence belongs to the metallo-dependent hydrolases superfamily. HutI family. It depends on Zn(2+) as a cofactor. Requires Fe(3+) as cofactor.

Its subcellular location is the cytoplasm. It catalyses the reaction 4-imidazolone-5-propanoate + H2O = N-formimidoyl-L-glutamate. Its pathway is amino-acid degradation; L-histidine degradation into L-glutamate; N-formimidoyl-L-glutamate from L-histidine: step 3/3. In terms of biological role, catalyzes the hydrolytic cleavage of the carbon-nitrogen bond in imidazolone-5-propanoate to yield N-formimidoyl-L-glutamate. It is the third step in the universal histidine degradation pathway. In Shewanella woodyi (strain ATCC 51908 / MS32), this protein is Imidazolonepropionase.